The sequence spans 504 residues: Maturase K (504 aa).

Belongs to the intron maturase 2 family. MatK subfamily.

The protein localises to the plastid. Its subcellular location is the chloroplast. Its function is as follows. Usually encoded in the trnK tRNA gene intron. Probably assists in splicing its own and other chloroplast group II introns. The protein is Maturase K of Amaranthus caudatus (Love-lies-bleeding).